A 631-amino-acid polypeptide reads, in one-letter code: Plastidic ATP/ADP-transporter (631 aa).

11 helical membrane-spanning segments follow: residues 106-126 (IELVTLKKIIPLGAMFFCILF), 149-169 (IIPFLKTWVNLPMAIGFMLLY), 180-200 (ALFYTVILPFIAFFGAFGFVL), 238-258 (LFYVMAELWGSVVVSVLFWGF), 271-290 (FYPLFGLGANVALIFSGRTV), 313-333 (GMMSIVVMMGGAICFFYWWVN), 369-389 (LATLVVAYGISINLVEVTWKS), 407-427 (DFSTATGIATFTMMLLSQWIF), 442-462 (VLLLTGVGFFSLLLFGAPLAP), 465-485 (AKFGMTPLLAAVYVGAMQNIF), and 543-563 (LASSTPYLGGVLLVIVLAWLG). A disordered region spans residues 586-631 (ERASLKIPVVSQNENGNGPLSSESSLNPAGGDSTNASSEPSSPRSL). Residues 595-631 (VSQNENGNGPLSSESSLNPAGGDSTNASSEPSSPRSL) are compositionally biased toward polar residues.

It belongs to the ADP/ATP translocase tlc (TC 2.A.12.2) family.

It is found in the plastid. The protein resides in the chloroplast membrane. This is Plastidic ATP/ADP-transporter from Solanum tuberosum (Potato).